Reading from the N-terminus, the 430-residue chain is Ribulose bisphosphate carboxylase (430 aa).

Catalysis depends on Lys-160, which acts as the Proton acceptor. Lys-162 serves as a coordination point for substrate. Mg(2+)-binding residues include Lys-186, Asp-188, and Glu-189. The residue at position 186 (Lys-186) is an N6-carboxylysine. The active-site Proton acceptor is the His-278. Substrate-binding positions include Arg-279, His-311, 348-350 (SGG), and 370-373 (QAGG).

It belongs to the RuBisCO large chain family. Type III subfamily. In terms of assembly, homodimer or homodecamer. In contrast to form I RuBisCO, the form III RuBisCO is composed solely of large subunits. It depends on Mg(2+) as a cofactor.

The catalysed reaction is 2 (2R)-3-phosphoglycerate + 2 H(+) = D-ribulose 1,5-bisphosphate + CO2 + H2O. The enzyme catalyses D-ribulose 1,5-bisphosphate + O2 = 2-phosphoglycolate + (2R)-3-phosphoglycerate + 2 H(+). In terms of biological role, catalyzes the addition of molecular CO(2) and H(2)O to ribulose 1,5-bisphosphate (RuBP), generating two molecules of 3-phosphoglycerate (3-PGA). Functions in an archaeal AMP degradation pathway, together with AMP phosphorylase and R15P isomerase. The sequence is that of Ribulose bisphosphate carboxylase from Pyrococcus horikoshii (strain ATCC 700860 / DSM 12428 / JCM 9974 / NBRC 100139 / OT-3).